We begin with the raw amino-acid sequence, 66 residues long: Ribosome biogenesis protein Nop10 (66 aa).

This sequence belongs to the NOP10 family.

Involved in ribosome biogenesis; more specifically in 18S rRNA pseudouridylation and in cleavage of pre-rRNA. The polypeptide is Ribosome biogenesis protein Nop10 (Staphylothermus marinus (strain ATCC 43588 / DSM 3639 / JCM 9404 / F1)).